The sequence spans 323 residues: Ethanolamine-phosphate cytidylyltransferase (323 aa).

This sequence belongs to the cytidylyltransferase family.

The protein localises to the cytoplasm. The protein resides in the nucleus. The catalysed reaction is phosphoethanolamine + CTP + H(+) = CDP-ethanolamine + diphosphate. It participates in phospholipid metabolism; phosphatidylethanolamine biosynthesis; phosphatidylethanolamine from ethanolamine: step 2/3. In terms of biological role, ethanolamine-phosphate cytidylyltransferase which catalyzes the second step of phosphatidylethanolamine biosynthesis. Involved in the maintenance of plasma membrane and required for proper sporulation. This chain is Ethanolamine-phosphate cytidylyltransferase, found in Saccharomyces cerevisiae (strain ATCC 204508 / S288c) (Baker's yeast).